We begin with the raw amino-acid sequence, 357 residues long: Peptide chain release factor 1 (357 aa).

N5-methylglutamine is present on Gln-236.

This sequence belongs to the prokaryotic/mitochondrial release factor family. Methylated by PrmC. Methylation increases the termination efficiency of RF1.

The protein resides in the cytoplasm. Its function is as follows. Peptide chain release factor 1 directs the termination of translation in response to the peptide chain termination codons UAG and UAA. In Mycobacterium bovis (strain ATCC BAA-935 / AF2122/97), this protein is Peptide chain release factor 1 (prfA).